We begin with the raw amino-acid sequence, 942 residues long: UvrABC system protein A (942 aa).

32–39 serves as a coordination point for ATP; the sequence is GLSGSGKS. Residues 251–278 form a C4-type zinc finger; that stretch reads CPVCGFTVPELEPRLFSFNAPFGSCPTC. 2 ABC transporter domains span residues 308 to 589 and 609 to 937; these read WNPI…KKSI and GNGR…HYLK. 641–648 provides a ligand contact to ATP; it reads GVSGSGKS. The C4-type zinc-finger motif lies at 740 to 766; sequence CEACSGDGIIKIEMHFLPDVYVPCEVC.

The protein belongs to the ABC transporter superfamily. UvrA family. As to quaternary structure, forms a heterotetramer with UvrB during the search for lesions.

The protein resides in the cytoplasm. Functionally, the UvrABC repair system catalyzes the recognition and processing of DNA lesions. UvrA is an ATPase and a DNA-binding protein. A damage recognition complex composed of 2 UvrA and 2 UvrB subunits scans DNA for abnormalities. When the presence of a lesion has been verified by UvrB, the UvrA molecules dissociate. This is UvrABC system protein A from Streptococcus pyogenes serotype M3 (strain ATCC BAA-595 / MGAS315).